Here is a 159-residue protein sequence, read N- to C-terminus: Ornithine decarboxylase antizyme (159 aa).

The protein belongs to the ODC antizyme family. In terms of assembly, interacts with ODC1 and thereby sterically blocks ODC homodimerization.

Functionally, ornithine decarboxylase (ODC) antizyme protein that negatively regulates ODC activity and intracellular polyamine biosynthesis and uptake in response to increased intracellular polyamine levels. Binds to ODC monomers, inhibiting the assembly of the functional ODC homodimer, and targets the monomers for ubiquitin-independent proteolytic destruction by the 26S proteasome. This is Ornithine decarboxylase antizyme from Caenorhabditis elegans.